The sequence spans 523 residues: GMP synthase [glutamine-hydrolyzing] (523 aa).

A Glutamine amidotransferase type-1 domain is found at lysine 8–asparagine 205. Cysteine 85 (nucleophile) is an active-site residue. Residues histidine 179 and glutamate 181 contribute to the active site. Residues tryptophan 206 to arginine 398 form the GMPS ATP-PPase domain. Residue serine 233–serine 239 participates in ATP binding.

In terms of assembly, homodimer.

It catalyses the reaction XMP + L-glutamine + ATP + H2O = GMP + L-glutamate + AMP + diphosphate + 2 H(+). Its pathway is purine metabolism; GMP biosynthesis; GMP from XMP (L-Gln route): step 1/1. In terms of biological role, catalyzes the synthesis of GMP from XMP. This Pasteurella multocida (strain Pm70) protein is GMP synthase [glutamine-hydrolyzing].